The primary structure comprises 177 residues: Acireductone dioxygenase (177 aa).

Residues His-99, His-101, Glu-105, and His-143 each contribute to the Fe(2+) site. Ni(2+) is bound by residues His-99, His-101, Glu-105, and His-143.

It belongs to the acireductone dioxygenase (ARD) family. In terms of assembly, monomer. The cofactor is Fe(2+). Requires Ni(2+) as cofactor.

It carries out the reaction 1,2-dihydroxy-5-(methylsulfanyl)pent-1-en-3-one + O2 = 3-(methylsulfanyl)propanoate + CO + formate + 2 H(+). The catalysed reaction is 1,2-dihydroxy-5-(methylsulfanyl)pent-1-en-3-one + O2 = 4-methylsulfanyl-2-oxobutanoate + formate + 2 H(+). It participates in amino-acid biosynthesis; L-methionine biosynthesis via salvage pathway; L-methionine from S-methyl-5-thio-alpha-D-ribose 1-phosphate: step 5/6. Its function is as follows. Catalyzes 2 different reactions between oxygen and the acireductone 1,2-dihydroxy-3-keto-5-methylthiopentene (DHK-MTPene) depending upon the metal bound in the active site. Fe-containing acireductone dioxygenase (Fe-ARD) produces formate and 2-keto-4-methylthiobutyrate (KMTB), the alpha-ketoacid precursor of methionine in the methionine recycle pathway. Ni-containing acireductone dioxygenase (Ni-ARD) produces methylthiopropionate, carbon monoxide and formate, and does not lie on the methionine recycle pathway. In Leptospira interrogans serogroup Icterohaemorrhagiae serovar copenhageni (strain Fiocruz L1-130), this protein is Acireductone dioxygenase.